A 143-amino-acid chain; its full sequence is Snake venom vascular endothelial growth factor toxin (143 aa).

A signal peptide spans 1 to 24; the sequence is MAAYLLAVAILFCIQGWPSATVQG. Pyrrolidone carboxylic acid is present on Gln-25. Cystine bridges form between Cys-38–Cys-80, Cys-69–Cys-115, and Cys-73–Cys-117. Residues 115–143 form a disordered region; the sequence is CECRPRSPGDVNNGRNPEEGEPRARFPFV. The span at 130 to 143 shows a compositional bias: basic and acidic residues; the sequence is NPEEGEPRARFPFV.

Belongs to the PDGF/VEGF growth factor family. Snake venom VEGF subfamily. In terms of assembly, homodimer; disulfide-linked. Interacts with VEGF receptor-2 (KDR). In terms of processing, the N-terminus is blocked for N-terminal sequencing, suggesting a Pyrrolidone carboxylic acid at Gln-25. Expressed by the venom gland.

It is found in the secreted. Snake venom VEGFs that may contribute to venom dispersion and prey subjugation by inducing vascular permeability and hypotension. This protein induces an increase in capillary permeability when intradermally injected into mice. Also provokes a drastic hypotensive effect after intravenous injection. The hypotension is mediated by nitric oxide (NO), which is produced by VEGF-activated endothelium NO synthase. Also induces angiogenesis in vitro. Unlike other crotalid VEGFs, this protein interacts with VEGF receptor-2 (KDR) with a high affinity (Kd=413 pM), whereas no interaction is detected with VEGF receptor-1 (FLT1). This Protobothrops jerdonii (Jerdon's pitviper) protein is Snake venom vascular endothelial growth factor toxin.